Here is a 113-residue protein sequence, read N- to C-terminus: Integration host factor subunit alpha (113 aa).

The interval 88-113 (ALNGGVSDETEGADDDDDDEEGEGDE) is disordered. The segment covering 95 to 113 (DETEGADDDDDDEEGEGDE) has biased composition (acidic residues).

It belongs to the bacterial histone-like protein family. In terms of assembly, heterodimer of an alpha and a beta chain.

This protein is one of the two subunits of integration host factor, a specific DNA-binding protein that functions in genetic recombination as well as in transcriptional and translational control. The sequence is that of Integration host factor subunit alpha from Anaeromyxobacter dehalogenans (strain 2CP-C).